The chain runs to 366 residues: Phospho-N-acetylmuramoyl-pentapeptide-transferase (366 aa).

A run of 10 helical transmembrane segments spans residues 27 to 47 (AALFTSALIVFLFGPTIINSL), 71 to 91 (TPTMGGLMILAGIVGASLLWA), 93 to 113 (LSNVYVVATLLVTLGFGAIGF), 138 to 158 (FVIAGIAVYFMMRTALASGIA), 174 to 194 (FMINIGIMFVVFGGFVIVGAG), 205 to 225 (GLAIVPVMIAAASFGVIAYLA), 245 to 265 (LAVVLGAVIGAGLGFLWFNAP), 268 to 288 (AIFMGDTGSLALGGTIGTVAV), 294 to 314 (IVMAIIGGLFVIETLSVIIQV), and 343 to 363 (QVVIRFWIVAVGLAMLGLSTL).

This sequence belongs to the glycosyltransferase 4 family. MraY subfamily. Requires Mg(2+) as cofactor.

Its subcellular location is the cell inner membrane. The enzyme catalyses UDP-N-acetyl-alpha-D-muramoyl-L-alanyl-gamma-D-glutamyl-meso-2,6-diaminopimeloyl-D-alanyl-D-alanine + di-trans,octa-cis-undecaprenyl phosphate = di-trans,octa-cis-undecaprenyl diphospho-N-acetyl-alpha-D-muramoyl-L-alanyl-D-glutamyl-meso-2,6-diaminopimeloyl-D-alanyl-D-alanine + UMP. Its pathway is cell wall biogenesis; peptidoglycan biosynthesis. Functionally, catalyzes the initial step of the lipid cycle reactions in the biosynthesis of the cell wall peptidoglycan: transfers peptidoglycan precursor phospho-MurNAc-pentapeptide from UDP-MurNAc-pentapeptide onto the lipid carrier undecaprenyl phosphate, yielding undecaprenyl-pyrophosphoryl-MurNAc-pentapeptide, known as lipid I. The polypeptide is Phospho-N-acetylmuramoyl-pentapeptide-transferase (Rhizobium johnstonii (strain DSM 114642 / LMG 32736 / 3841) (Rhizobium leguminosarum bv. viciae)).